Here is a 426-residue protein sequence, read N- to C-terminus: Lipoyl synthase, mitochondrial (426 aa).

Residues M1–Y29 constitute a mitochondrion transit peptide. The segment covering R27–Q42 has biased composition (polar residues). The interval R27 to S61 is disordered. The segment covering S43–K55 has biased composition (low complexity). [4Fe-4S] cluster is bound by residues C140, C145, C151, C171, C175, C178, and S388. The 224-residue stretch at G154–L377 folds into the Radical SAM core domain.

It belongs to the radical SAM superfamily. Lipoyl synthase family. [4Fe-4S] cluster is required as a cofactor.

It is found in the mitochondrion. It carries out the reaction [[Fe-S] cluster scaffold protein carrying a second [4Fe-4S](2+) cluster] + N(6)-octanoyl-L-lysyl-[protein] + 2 oxidized [2Fe-2S]-[ferredoxin] + 2 S-adenosyl-L-methionine + 4 H(+) = [[Fe-S] cluster scaffold protein] + N(6)-[(R)-dihydrolipoyl]-L-lysyl-[protein] + 4 Fe(3+) + 2 hydrogen sulfide + 2 5'-deoxyadenosine + 2 L-methionine + 2 reduced [2Fe-2S]-[ferredoxin]. The protein operates within protein modification; protein lipoylation via endogenous pathway; protein N(6)-(lipoyl)lysine from octanoyl-[acyl-carrier-protein]: step 2/2. Its function is as follows. Catalyzes the radical-mediated insertion of two sulfur atoms into the C-6 and C-8 positions of the octanoyl moiety bound to the lipoyl domains of lipoate-dependent enzymes, thereby converting the octanoylated domains into lipoylated derivatives. The chain is Lipoyl synthase, mitochondrial from Podospora anserina (strain S / ATCC MYA-4624 / DSM 980 / FGSC 10383) (Pleurage anserina).